The primary structure comprises 1183 residues: ATP-dependent helicase/nuclease subunit A (1183 aa).

Residues 3-461 (VQWTDEQQRA…IDLTKNFRSR (459 aa)) enclose the UvrD-like helicase ATP-binding domain. 24–31 (AAAGSGKT) serves as a coordination point for ATP. The 297-residue stretch at 473–769 (RQVMDEAVGE…RIMTIHQSKG (297 aa)) folds into the UvrD-like helicase C-terminal domain.

Belongs to the helicase family. AddA subfamily. Heterodimer of AddA and AddB/RexB. Requires Mg(2+) as cofactor.

It carries out the reaction Couples ATP hydrolysis with the unwinding of duplex DNA by translocating in the 3'-5' direction.. The enzyme catalyses ATP + H2O = ADP + phosphate + H(+). Functionally, the heterodimer acts as both an ATP-dependent DNA helicase and an ATP-dependent, dual-direction single-stranded exonuclease. Recognizes the chi site generating a DNA molecule suitable for the initiation of homologous recombination. The AddA nuclease domain is required for chi fragment generation; this subunit has the helicase and 3' -&gt; 5' nuclease activities. The sequence is that of ATP-dependent helicase/nuclease subunit A from Exiguobacterium sibiricum (strain DSM 17290 / CCUG 55495 / CIP 109462 / JCM 13490 / 255-15).